The following is a 177-amino-acid chain: Embryogenesis-like protein (177 aa).

Positions 98–118 (VDEINLKFAEAREEIEMAMDA) form a coiled coil.

As to quaternary structure, interacts with HAG1/GCN5. Expressed in flowers, leaves, stems and siliques.

Its subcellular location is the nucleus. In terms of biological role, activates gene expression by recruiting HAG1/GCN5 and triggering subsequent histone H3 acetylation of target genes promoters. This is Embryogenesis-like protein from Arabidopsis thaliana (Mouse-ear cress).